The chain runs to 515 residues: Histidine ammonia-lyase (515 aa).

The segment at residues 146 to 148 is a cross-link (5-imidazolinone (Ala-Gly)); that stretch reads ASG. Position 147 is a 2,3-didehydroalanine (Ser) (Ser-147).

This sequence belongs to the PAL/histidase family. Post-translationally, contains an active site 4-methylidene-imidazol-5-one (MIO), which is formed autocatalytically by cyclization and dehydration of residues Ala-Ser-Gly.

It localises to the cytoplasm. The enzyme catalyses L-histidine = trans-urocanate + NH4(+). The protein operates within amino-acid degradation; L-histidine degradation into L-glutamate; N-formimidoyl-L-glutamate from L-histidine: step 1/3. This chain is Histidine ammonia-lyase (hutH), found in Ralstonia nicotianae (strain ATCC BAA-1114 / GMI1000) (Ralstonia solanacearum).